Consider the following 327-residue polypeptide: Putative ABC transporter ATP-binding protein MM_0887 (327 aa).

Positions 1-44 (MSKSTPLKSSIIRADLPEQAEGRTGPETGKDPEKTGNSEGKTDT) are disordered. Over residues 28 to 44 (TGKDPEKTGNSEGKTDT) the composition is skewed to basic and acidic residues. The ABC transporter domain maps to 47–282 (IEIKDLCHRY…PALLRKAHLR (236 aa)). Position 81 to 88 (81 to 88 (GANGAGKS)) interacts with ATP.

This sequence belongs to the ABC transporter superfamily.

It is found in the cell membrane. Probably part of an ABC transporter complex. Responsible for energy coupling to the transport system. This is Putative ABC transporter ATP-binding protein MM_0887 from Methanosarcina mazei (strain ATCC BAA-159 / DSM 3647 / Goe1 / Go1 / JCM 11833 / OCM 88) (Methanosarcina frisia).